Consider the following 1306-residue polypeptide: Signaling mucin MSB2 (1306 aa).

Positions 1 to 21 (MQFPFACLLSTLVISGSLARA) are cleaved as a signal peptide. The Extracellular segment spans residues 22–1185 (SPFDFIFGNG…VSTSSKSKKK (1164 aa)). N-linked (GlcNAc...) asparagine glycosylation is present at Asn-30. Disordered stretches follow at residues 248 to 267 (SADFSSPSSPTTTDISLSAA), 519 to 539 (QAGGSSMTNPSSSTIVYSSST), 561 to 580 (YMAGNLQSQPPSTSSLLSES), 665 to 685 (SSISSEFSPSQTTTQMNSASS), and 709 to 849 (TSSS…SVSQ). Polar residues predominate over residues 519–528 (QAGGSSMTNP). The span at 529 to 539 (SSSTIVYSSST) shows a compositional bias: low complexity. Low complexity-rich tracts occupy residues 665–674 (SSISSEFSPS) and 709–831 (TSSS…TSSQ). Repeat copies occupy residues 698–714 (SQVSDTSVSYTTSSSSV), 715–731 (SQVSDTPVSYTTSSSSV), 732–748 (SQVSDTPVSYTTSSSSV), 749–765 (SQVSDTPVSYTTSSSSV), 766–782 (SQVSDTPVSYTTSSSSV), 783–799 (SQVSDTSVPSTSSRSSV), and 800–816 (SQVSDTPVPSTSSRSSV). The segment at 698–816 (SQVSDTSVSY…VPSTSSRSSV (119 aa)) is 7 X 17 AA tandem repeats. N-linked (GlcNAc...) asparagine glycans are attached at residues Asn-859, Asn-885, Asn-945, Asn-1049, and Asn-1088. Residues 1123–1158 (SNSGGSSDGSSSSNSNSGSSGSGSNSNSGVSSSSGN) form a disordered region. N-linked (GlcNAc...) asparagine glycosylation is present at Asn-1175. Residues 1186-1206 (IIGLVIGVVVGGCLYILFMIF) traverse the membrane as a helical segment. Topologically, residues 1207 to 1306 (AFKYIIRRRI…SQNSLGWNEV (100 aa)) are cytoplasmic. The disordered stretch occupies residues 1272–1291 (LTNNDSTPTRHNTSSSIPKI). Position 1300 is a phosphoserine (Ser-1300).

This sequence belongs to the HKR1/MSB2 family. In terms of assembly, interacts with CDC42 and SHO1. O-glycosylated in the Ser/Thr-rich regions.

It is found in the cell membrane. Plasma membrane signaling mucin that promotes activation of the MAPK for the filamentous growth pathway. Partially redundant with the SHO1 osmosensing branch for the activation of STE11. The protein is Signaling mucin MSB2 (MSB2) of Saccharomyces cerevisiae (strain ATCC 204508 / S288c) (Baker's yeast).